The primary structure comprises 658 residues: UvrABC system protein B (658 aa).

In terms of domain architecture, Helicase ATP-binding spans 25-416; sequence KSLKNNNHYQ…QKNVAEQIIR (392 aa). Residue 38-45 participates in ATP binding; that stretch reads GVTGSGKT. Positions 91 to 114 match the Beta-hairpin motif; sequence HFDYYQPESYIPRRDLFIEKDSSI. One can recognise a Helicase C-terminal domain in the interval 433–607; the sequence is QVQDLFDEIK…ELKLRDDEIK (175 aa). One can recognise a UVR domain in the interval 623–658; sequence EKIIKELDKKMRERAKNLDFEEAMRLRDEIAQLRTL.

It belongs to the UvrB family. Forms a heterotetramer with UvrA during the search for lesions. Interacts with UvrC in an incision complex.

The protein resides in the cytoplasm. Functionally, the UvrABC repair system catalyzes the recognition and processing of DNA lesions. A damage recognition complex composed of 2 UvrA and 2 UvrB subunits scans DNA for abnormalities. Upon binding of the UvrA(2)B(2) complex to a putative damaged site, the DNA wraps around one UvrB monomer. DNA wrap is dependent on ATP binding by UvrB and probably causes local melting of the DNA helix, facilitating insertion of UvrB beta-hairpin between the DNA strands. Then UvrB probes one DNA strand for the presence of a lesion. If a lesion is found the UvrA subunits dissociate and the UvrB-DNA preincision complex is formed. This complex is subsequently bound by UvrC and the second UvrB is released. If no lesion is found, the DNA wraps around the other UvrB subunit that will check the other stand for damage. In Helicobacter pylori (strain J99 / ATCC 700824) (Campylobacter pylori J99), this protein is UvrABC system protein B.